The chain runs to 383 residues: MASILTLDGLYAEVPKFLPEALREGCAGKKPLSFYIQQILNLMGCDGNEYHVLFTSSSEEANTHMIMAVVRRHLLRTQQRPHVIIGAAEPPSVTECVKALAQEKRCVYTIIPLKNFEIDPVAVYDAIQSNTCLACISGTNAVVKTFNKLQEISKVLGAIPLHSEMSDVVYQGCIKQHPPADSFSLNSLYGFLGVGVLGIKKKAMQGLGPLIFGGGLRGGSPNVPGIHAMYKTLTQQRPSIKKINTVHKLFMKILKKHQHVYLPIEGMSSNGMPSNGMPSSGIPVEGPKSLPGYILFSVGRSAEELQKKIFTKFNVKVGRIVNLQEVLFRIKIPQKYWETLLFIQLREDLTKEDIKRVMAILMYLDTVTPRGSLPPPSYSSSFS.

Residues 58–59 and 184–186 contribute to the pyridoxal 5'-phosphate site; these read SE and SLN.

Belongs to the class-V pyridoxal-phosphate-dependent aminotransferase family. NifS/IscS subfamily. The cofactor is pyridoxal 5'-phosphate.

Its subcellular location is the virion. The sequence is that of NifS-like protein from African swine fever virus (isolate Pig/Kenya/KEN-50/1950) (ASFV).